The following is a 103-amino-acid chain: Stefin-3 (103 aa).

Residues 52-56 (QVVAG) carry the Secondary area of contact motif.

Belongs to the cystatin family.

It is found in the cytoplasm. In terms of biological role, this is an intracellular thiol proteinase inhibitor. The protein is Stefin-3 (Stfa3) of Mus musculus (Mouse).